The following is a 272-amino-acid chain: R3H domain-containing protein 4 (272 aa).

The tract at residues 141–167 (LEDEGKSKARRRGPTRGEDRRREDPAY) is disordered. Positions 155–165 (TRGEDRRREDP) are enriched in basic and acidic residues. Residues 191-254 (METLETWEER…KRQMKVSNRH (64 aa)) form the R3H domain.

It localises to the nucleus. This Bos taurus (Bovine) protein is R3H domain-containing protein 4 (R3HDM4).